A 121-amino-acid polypeptide reads, in one-letter code: UPF0295 protein ABC1323 (121 aa).

Helical transmembrane passes span 14–34 (TFALSLVFVGILIMYVGIFFK) and 41–61 (VIAMILGFLAVIASTVVYFFI).

It belongs to the UPF0295 family.

The protein resides in the cell membrane. In Shouchella clausii (strain KSM-K16) (Alkalihalobacillus clausii), this protein is UPF0295 protein ABC1323.